Here is a 213-residue protein sequence, read N- to C-terminus: Insulin-like peptide INSL6 (213 aa).

An N-terminal signal peptide occupies residues 1-20; the sequence is MPRLLRLSLLWLGLLLVRFS. Disulfide bonds link C33/C179, C45/C192, and C178/C183. Residues 55–168 constitute a propeptide, connecting peptide; sequence FEEETPFSRL…SNLFWGHHPQ (114 aa). A propeptide spanning residues 201 to 213 is cleaved from the precursor; the sequence is LKEKRSSLVTKIY.

This sequence belongs to the insulin family. As to expression, testis specific.

The protein localises to the secreted. Its function is as follows. May have a role in sperm development and fertilization. The sequence is that of Insulin-like peptide INSL6 (INSL6) from Homo sapiens (Human).